Here is a 266-residue protein sequence, read N- to C-terminus: Norfluorocurarine synthase 2 (266 aa).

Residues 11 to 121 (HFVLVHGAGH…VMPDSTHPPN (111 aa)) enclose the AB hydrolase-1 domain. Residues serine 86, aspartate 216, and histidine 244 contribute to the active site.

The protein belongs to the AB hydrolase superfamily. In terms of assembly, homodimer.

It catalyses the reaction 17-dehydropreakuammicine + H2O = norfluorocurarine + methanol + CO2. The protein operates within alkaloid biosynthesis. In terms of biological role, hydrolase involved in the biosynthesis of curare monoterpene indole alkaloids (MIAs), natural products such as diaboline, a pharmacologically active compound used to regulate blood pressure. Curare alkaloids act as animal glycine receptor antagonists. Catalyzes the conversion of dehydropreakuammicine to norfluorocurarine. This Strychnos sp protein is Norfluorocurarine synthase 2.